Here is a 248-residue protein sequence, read N- to C-terminus: Probable transcriptional regulatory protein Msil_2305 (248 aa).

It belongs to the TACO1 family.

It localises to the cytoplasm. The protein is Probable transcriptional regulatory protein Msil_2305 of Methylocella silvestris (strain DSM 15510 / CIP 108128 / LMG 27833 / NCIMB 13906 / BL2).